Here is a 250-residue protein sequence, read N- to C-terminus: Type III pantothenate kinase (250 aa).

An ATP-binding site is contributed by 13–20; it reads DVGNSYLK. 110 to 113 is a binding site for substrate; the sequence is GNDL. Asp112 acts as the Proton acceptor in catalysis. Thr134 contacts ATP. Thr186 is a substrate binding site.

This sequence belongs to the type III pantothenate kinase family. Homodimer. Requires NH4(+) as cofactor. K(+) is required as a cofactor.

It is found in the cytoplasm. It carries out the reaction (R)-pantothenate + ATP = (R)-4'-phosphopantothenate + ADP + H(+). It participates in cofactor biosynthesis; coenzyme A biosynthesis; CoA from (R)-pantothenate: step 1/5. Its function is as follows. Catalyzes the phosphorylation of pantothenate (Pan), the first step in CoA biosynthesis. The chain is Type III pantothenate kinase from Mycoplasmopsis synoviae (strain 53) (Mycoplasma synoviae).